Here is a 278-residue protein sequence, read N- to C-terminus: Small ribosomal subunit protein uS3 (278 aa).

The KH type-2 domain occupies 38–106 (IRKLLSKGME…QVQLNILEVK (69 aa)). Positions 213 to 278 (RQAQAAARAG…APAPAENQEG (66 aa)) are disordered. A compositionally biased stretch (low complexity) spans 214-223 (QAQAAARAGV). Over residues 232-253 (RGGERPSRGSRGDRPTRADRGG) the composition is skewed to basic and acidic residues. Low complexity predominate over residues 259–278 (EATGAATEQAAPAPAENQEG).

This sequence belongs to the universal ribosomal protein uS3 family. As to quaternary structure, part of the 30S ribosomal subunit. Forms a tight complex with proteins S10 and S14.

Binds the lower part of the 30S subunit head. Binds mRNA in the 70S ribosome, positioning it for translation. The chain is Small ribosomal subunit protein uS3 from Nocardioides sp. (strain ATCC BAA-499 / JS614).